Consider the following 272-residue polypeptide: Shikimate dehydrogenase (NADP(+)) (272 aa).

Residues 14 to 16 (SKS) and Thr61 each bind shikimate. The active-site Proton acceptor is Lys65. Glu77 is a binding site for NADP(+). Residues Asn86 and Asp102 each coordinate shikimate. NADP(+) is bound by residues 126–130 (GAGGA), 149–154 (NRTASR), and Met213. Tyr215 contacts shikimate. Gly237 is an NADP(+) binding site.

It belongs to the shikimate dehydrogenase family. In terms of assembly, homodimer.

The catalysed reaction is shikimate + NADP(+) = 3-dehydroshikimate + NADPH + H(+). Its pathway is metabolic intermediate biosynthesis; chorismate biosynthesis; chorismate from D-erythrose 4-phosphate and phosphoenolpyruvate: step 4/7. Its function is as follows. Involved in the biosynthesis of the chorismate, which leads to the biosynthesis of aromatic amino acids. Catalyzes the reversible NADPH linked reduction of 3-dehydroshikimate (DHSA) to yield shikimate (SA). The polypeptide is Shikimate dehydrogenase (NADP(+)) (Salmonella heidelberg (strain SL476)).